Here is a 51-residue protein sequence, read N- to C-terminus: Ovomucoid (51 aa).

The region spanning 3–51 is the Kazal-like domain; that stretch reads IDCSGYPKPACTLEFFPLCGSDNQTYSNKCAFCNAAVEKNVTLNHIGEC. Intrachain disulfides connect Cys5/Cys35, Cys13/Cys32, and Cys21/Cys51. Asn42 carries an N-linked (GlcNAc...) asparagine glycan.

The protein localises to the secreted. In Eudromia elegans (Elegant crested-tinamou), this protein is Ovomucoid.